The following is a 119-amino-acid chain: Phenol 2-monooxygenase, oxygenase component DmpO (119 aa).

In terms of assembly, the multicomponent enzyme phenol hydroxylase is formed by DmpL (P1 component), DmpM (P2 component), DmpN (P3 component), DmpO (P4 component) and DmpP (P5 component). The oxygenase component is a dimer composed of three subunits, DmpL, DmpN and DmpO (DmpLNO).

It carries out the reaction phenol + NADH + O2 + H(+) = catechol + NAD(+) + H2O. The protein operates within aromatic compound metabolism; phenol degradation. Requires DmpM for efficient turnover. The activity of DmpLNO oxygenase is inhibited by dithiothreitol (DTT) by a mechanism apparently involving H(2)O(2) generation. Its function is as follows. Part of a multicomponent enzyme which catalyzes the degradation of phenol and some of its methylated derivatives. DmpL, DmpN and DmpO form the oxygenase component of the complex. Required for growth on phenol and for in vitro phenol hydroxylase activity. This is Phenol 2-monooxygenase, oxygenase component DmpO from Pseudomonas sp. (strain CF600).